The primary structure comprises 100 residues: MSRVCDITGQGKSFGNKVSHSNRKTKRTYLVNLHNVTLLSDILNRKFKFKVSSRTLRTIDYKGGFDLYLLNTSSRKLTDKAQKIKKLVKNAVAKGVKVSL.

The interval 1-21 is disordered; it reads MSRVCDITGQGKSFGNKVSHS. Residues 10-19 show a composition bias toward polar residues; that stretch reads QGKSFGNKVS.

The protein belongs to the bacterial ribosomal protein bL28 family.

In Ehrlichia canis (strain Jake), this protein is Large ribosomal subunit protein bL28.